A 300-amino-acid polypeptide reads, in one-letter code: MLPQKKTDSFRLEPVPDQHIEVKDKPRRKWYIGETSVWVFLFLYLIAIAYPLLWMVMSAFKNSDDIFEHSWSLPSSWHPENFVSAWNQGISSYFMNSVIVTALTCVITVFISAWAAYGLSRFEFKGKGFFLVLCLGGLMLTPQVSLVPLYSIIQSLGLYNTYWALILPYAAYRIPFTIILIRSYFLSISKELEEAAYLDGCTSFGVFFRIFLPMSVPILVTSGILTAYHTWNEFMFAIIFIDDENLRTIPAGLMQFRDALQTDWGVLLAGLTISAAPIIILFLLMQKYFVRGIASGSVKG.

6 helical membrane-spanning segments follow: residues 37-57 (VWVF…WMVM), 98-118 (VIVT…AAYG), 129-149 (FFLV…LVPL), 161-181 (TYWA…IILI), 204-224 (FGVF…TSGI), and 264-284 (WGVL…LFLL). An ABC transmembrane type-1 domain is found at 94-285 (FMNSVIVTAL…APIIILFLLM (192 aa)).

This sequence belongs to the binding-protein-dependent transport system permease family. MalFG subfamily.

It localises to the cell membrane. Functionally, probably part of the binding-protein-dependent transport system YurMNO. Probably responsible for the translocation of the substrate across the membrane. The protein is Probable ABC transporter permease protein YurM (yurM) of Bacillus subtilis (strain 168).